The sequence spans 342 residues: Farnesyl pyrophosphate synthase 2 (342 aa).

Isopentenyl diphosphate-binding residues include lysine 47, arginine 50, and glutamine 86. Aspartate 93 and aspartate 97 together coordinate Mg(2+). Position 102 (arginine 102) interacts with dimethylallyl diphosphate. Arginine 103 is an isopentenyl diphosphate binding site. 5 residues coordinate dimethylallyl diphosphate: lysine 190, threonine 191, glutamine 229, lysine 246, and lysine 255.

The protein belongs to the FPP/GGPP synthase family. It depends on Mg(2+) as a cofactor.

Its subcellular location is the cytoplasm. It carries out the reaction isopentenyl diphosphate + dimethylallyl diphosphate = (2E)-geranyl diphosphate + diphosphate. It catalyses the reaction isopentenyl diphosphate + (2E)-geranyl diphosphate = (2E,6E)-farnesyl diphosphate + diphosphate. The protein operates within isoprenoid biosynthesis; farnesyl diphosphate biosynthesis; farnesyl diphosphate from geranyl diphosphate and isopentenyl diphosphate: step 1/1. Its pathway is isoprenoid biosynthesis; geranyl diphosphate biosynthesis; geranyl diphosphate from dimethylallyl diphosphate and isopentenyl diphosphate: step 1/1. Functionally, catalyzes the sequential condensation of isopentenyl pyrophosphate with the allylic pyrophosphates, dimethylallyl pyrophosphate, and then with the resultant geranylpyrophosphate to the ultimate product farnesyl pyrophosphate. This chain is Farnesyl pyrophosphate synthase 2 (FPS2), found in Arabidopsis thaliana (Mouse-ear cress).